Consider the following 173-residue polypeptide: MNPRRKSRFKLVIFVVLGIAIASGLMLYALRQNIDLFYTPSEVIQGKDNNPNQKPEVGQRIRVGGMVVEGTVVRDPKSLKVRFDLNDIGPAITVEYEGILPDLFREGQGIVAQGVLTQSAVLSATEVLAKHDENYVPPELGEKMQKVHKPMGIKAADLKGESERDRQEKEGAK.

The Cytoplasmic segment spans residues 1–8; it reads MNPRRKSR. A helical; Signal-anchor for type II membrane protein membrane pass occupies residues 9–29; it reads FKLVIFVVLGIAIASGLMLYA. Over 30 to 173 the chain is Periplasmic; that stretch reads LRQNIDLFYT…RDRQEKEGAK (144 aa). Positions 131 and 135 each coordinate heme. The interval 139-173 is disordered; the sequence is ELGEKMQKVHKPMGIKAADLKGESERDRQEKEGAK. Over residues 156 to 173 the composition is skewed to basic and acidic residues; it reads ADLKGESERDRQEKEGAK.

The protein belongs to the CcmE/CycJ family.

It is found in the cell inner membrane. Functionally, heme chaperone required for the biogenesis of c-type cytochromes. Transiently binds heme delivered by CcmC and transfers the heme to apo-cytochromes in a process facilitated by CcmF and CcmH. The sequence is that of Cytochrome c-type biogenesis protein CcmE from Haemophilus influenzae (strain 86-028NP).